The sequence spans 199 residues: dITP/XTP pyrophosphatase (199 aa).

Position 8–13 (8–13 (TSNINK)) interacts with substrate. Catalysis depends on Asp-68, which acts as the Proton acceptor. A Mg(2+)-binding site is contributed by Asp-68. Residues Ser-69, 155-158 (FGYN), Lys-177, and 182-183 (HR) contribute to the substrate site.

It belongs to the HAM1 NTPase family. As to quaternary structure, homodimer. Mg(2+) is required as a cofactor.

It carries out the reaction XTP + H2O = XMP + diphosphate + H(+). The catalysed reaction is dITP + H2O = dIMP + diphosphate + H(+). The enzyme catalyses ITP + H2O = IMP + diphosphate + H(+). Its function is as follows. Pyrophosphatase that catalyzes the hydrolysis of nucleoside triphosphates to their monophosphate derivatives, with a high preference for the non-canonical purine nucleotides XTP (xanthosine triphosphate), dITP (deoxyinosine triphosphate) and ITP. Seems to function as a house-cleaning enzyme that removes non-canonical purine nucleotides from the nucleotide pool, thus preventing their incorporation into DNA/RNA and avoiding chromosomal lesions. In Borrelia recurrentis (strain A1), this protein is dITP/XTP pyrophosphatase.